Consider the following 387-residue polypeptide: MKVTQMYKNFLENEKAGGVVLIIATIVSLLVANSSIGHSYIGFWEMFVGGHTIEHYVNDGLMTIFFLLIGLELEREVYAGELSNFKKALLPIIAALGGMIVPACIHMFFNTGTPFQSGSGIPMATDIAFAVGILSLLGNKVPLSLKVFLTALAVIDDLGAIFTIAIFYSRGIDVMYLAGAAGIWAVLFILNRRNVNILWPYLLGGIVMWYFMLHSGVHATITGVILAFVIPFGKGDPDSISIKLQHWLHKPVAFIILPIFALANTCIIIDSDWSASLMSTNSIGIFLGLVVGKPLGITLFCAIAVWLGICSIPNDLKWMQVIGVACLGGIGFTMSIFITLLAFDDHAVISGSKIAIMLSSVTAALIGLLWLKMTLKEPLSNELTEEI.

A run of 12 helical transmembrane segments spans residues 16-36, 53-73, 89-109, 118-138, 147-167, 171-191, 197-217, 220-240, 251-271, 283-303, 321-341, and 354-374; these read AGGV…NSSI, IEHY…GLEL, LLPI…HMFF, GSGI…SLLG, VFLT…IAIF, GIDV…FILN, ILWP…HSGV, TITG…PDSI, PVAF…IIDS, IGIF…FCAI, VIGV…ITLL, and IAIM…LKMT.

The protein belongs to the NhaA Na(+)/H(+) (TC 2.A.33) antiporter family.

The protein resides in the cell inner membrane. The enzyme catalyses Na(+)(in) + 2 H(+)(out) = Na(+)(out) + 2 H(+)(in). In terms of biological role, na(+)/H(+) antiporter that extrudes sodium in exchange for external protons. This chain is Na(+)/H(+) antiporter NhaA, found in Cytophaga hutchinsonii (strain ATCC 33406 / DSM 1761 / CIP 103989 / NBRC 15051 / NCIMB 9469 / D465).